Here is a 613-residue protein sequence, read N- to C-terminus: RNA polymerase-associated protein RTF1 homolog (613 aa).

Disordered stretches follow at residues 1 to 90 (MSSS…DKAR) and 121 to 247 (QQLA…KDKI). The segment covering 55-68 (PAKKKTLTKRKRRA) has biased composition (basic residues). Residues 72–81 (SDDDQVDDDL) show a composition bias toward acidic residues. Positions 167-176 (AAFHRPSDIN) are enriched in basic and acidic residues. Residues 175–209 (INRKHKEKNAMDALKNKRKEIEKKNAKNEALSIDA) adopt a coiled-coil conformation. A compositionally biased stretch (low complexity) spans 215-235 (SGSSSSSSSSESSRSSSSSRE). Positions 236–247 (SSPERVSEKDKI) are enriched in basic and acidic residues. One can recognise a Plus3 domain in the interval 252–383 (VDGLSELRRA…KKQDIEKAIN (132 aa)). Residues 425–462 (RGDIREAEQIQTKIDEIERQADELEKERSKSISAIAFI) adopt a coiled-coil conformation. 2 disordered regions span residues 485–549 (SQDD…KTDI) and 564–613 (LKDF…SSAV). The span at 510–521 (TLSASSSTTNLS) shows a compositional bias: low complexity. Polar residues predominate over residues 569-586 (TPESSGNKRPSISSSKGV). Positions 602–613 (GSSTSAAPSSAV) are enriched in low complexity.

Component of the PAF1 complex which consists of at least cdc-73, ctr-9, leo-1, pafo-1 and rtfo-1.

It localises to the nucleus. Functionally, component of the PAF1 complex which is a multifunctional complex involved in transcription initiation via genetic interactions with TATA-binding proteins, elongation and transcription-coupled histone modification. This chain is RNA polymerase-associated protein RTF1 homolog, found in Caenorhabditis elegans.